We begin with the raw amino-acid sequence, 469 residues long: Glutamate--tRNA ligase (469 aa).

The 'HIGH' region motif lies at 9–19 (PSPTGFLHVGG). Residues C98, C100, C125, and D127 each contribute to the Zn(2+) site. The short motif at 236–240 (KLSKR) is the 'KMSKS' region element. Residue K239 participates in ATP binding.

The protein belongs to the class-I aminoacyl-tRNA synthetase family. Glutamate--tRNA ligase type 1 subfamily. As to quaternary structure, monomer. The cofactor is Zn(2+).

It is found in the cytoplasm. The catalysed reaction is tRNA(Glu) + L-glutamate + ATP = L-glutamyl-tRNA(Glu) + AMP + diphosphate. In terms of biological role, catalyzes the attachment of glutamate to tRNA(Glu) in a two-step reaction: glutamate is first activated by ATP to form Glu-AMP and then transferred to the acceptor end of tRNA(Glu). This Shewanella loihica (strain ATCC BAA-1088 / PV-4) protein is Glutamate--tRNA ligase.